Reading from the N-terminus, the 734-residue chain is MDSILFWLVPVASVLALCFAYYFHKQMMKESEGTPQMIKIAAAVRKGAMSYLKQQYKIVGCVFLGLVILFSIMAYGFHVQNVWVPIAFLTGGFFSGLSGFLGMKTATYASARTANAARNSLNSGLRIAFRSGAVMGLVVVGLGLLDISFWYLLLNAVIPADALTPTHKLCVITTTMLTFGMGASTQALFARVGGGIYTKAADVGADLVGKVEAGIPEDDPRNPATIADNVGDNVGDVAGMGADLYESYCGSILATAALGAAAFIHSADTVMQFKAVIAPMLIAAVGILLSIIGIFSVRTKENATVKDLLGSLAFGTNLSSVLIVAATFLILWLLQLDNWIWISCAVVVGLLVGIVIGRSTEYYTSQSYRPTQKLSESGKTGPATVIISGIGLGMLSTAIPVIAVVVGIIASFLLASGFDFSNVGMGLYGIGIAAVGMLSTLGITLATDAYGPIADNAGGNAEMAGLGAEVRKRTDALDSLGNTTAATGKGFAIGSAALTGLALLASYIEEIRIGLTRLGTVDLSMPNGDVVSTANATFVDFMNYYDVTLMNPKVLSGMFLGSMMAFLFCGLTMNAVGRAAGHMVDEVRRQFREIKGILTGEAEPDYERCVAISTKGAQREMVIPSLIAILAPIATGLIFGVTGVLGLLIGGLSTGFVLAIFMANAGGAWDNAKKYVEEGNFGGKGGEVHKATVVGDTVGDPFKDTSGPSLNILIKLMSMVAIVMAGLTVAWSLF.

Helical transmembrane passes span 3 to 23 (SILF…AYYF), 58 to 78 (IVGC…YGFH), 82 to 102 (VWVP…GFLG), 134 to 154 (VMGL…YLLL), and 169 to 189 (LCVI…QALF). Lys-199 is a binding site for substrate. Mg(2+) contacts are provided by Asp-202, Asp-206, Asn-229, and Asp-232. A run of 7 helical transmembrane segments spans residues 244 to 264 (LYES…AAFI), 275 to 295 (AVIA…IGIF), 314 to 334 (FGTN…LWLL), 336 to 356 (LDNW…GIVI), 377 to 397 (SGKT…MLST), 398 to 418 (AIPV…ASGF), and 423 to 443 (VGMG…TLGI). A Mg(2+)-binding site is contributed by Asp-455. Helical transmembrane passes span 491-511 (FAIG…IEEI), 557-577 (GMFL…NAVG), 629-649 (ILAP…GLLI), and 650-670 (GGLS…GAWD). Ca(2+) contacts are provided by Asp-670, Asp-696, and Asp-700. Lys-703 lines the substrate pocket. A helical transmembrane segment spans residues 712–732 (ILIKLMSMVAIVMAGLTVAWS).

This sequence belongs to the H(+)-translocating pyrophosphatase (TC 3.A.10) family. K(+)-stimulated subfamily. Homodimer. The cofactor is Mg(2+).

The protein resides in the cell inner membrane. It carries out the reaction Na(+)(in) + diphosphate + H2O = Na(+)(out) + 2 phosphate + H(+). Its activity is regulated as follows. Requires K(+) for maximal activity. Functionally, sodium pump that utilizes the energy of pyrophosphate hydrolysis as the driving force for Na(+) movement across the membrane. The protein is Putative K(+)-stimulated pyrophosphate-energized sodium pump of Bacteroides thetaiotaomicron (strain ATCC 29148 / DSM 2079 / JCM 5827 / CCUG 10774 / NCTC 10582 / VPI-5482 / E50).